A 157-amino-acid polypeptide reads, in one-letter code: SsrA-binding protein (157 aa).

The disordered stretch occupies residues 133–157 (LHDKRETAKERDWQRDKARLMRDKG). Positions 135 to 157 (DKRETAKERDWQRDKARLMRDKG) are enriched in basic and acidic residues.

This sequence belongs to the SmpB family.

It localises to the cytoplasm. Required for rescue of stalled ribosomes mediated by trans-translation. Binds to transfer-messenger RNA (tmRNA), required for stable association of tmRNA with ribosomes. tmRNA and SmpB together mimic tRNA shape, replacing the anticodon stem-loop with SmpB. tmRNA is encoded by the ssrA gene; the 2 termini fold to resemble tRNA(Ala) and it encodes a 'tag peptide', a short internal open reading frame. During trans-translation Ala-aminoacylated tmRNA acts like a tRNA, entering the A-site of stalled ribosomes, displacing the stalled mRNA. The ribosome then switches to translate the ORF on the tmRNA; the nascent peptide is terminated with the 'tag peptide' encoded by the tmRNA and targeted for degradation. The ribosome is freed to recommence translation, which seems to be the essential function of trans-translation. The protein is SsrA-binding protein of Methylobacterium sp. (strain 4-46).